Consider the following 80-residue polypeptide: Acyl carrier protein (80 aa).

The Carrier domain maps to 2–77 (SEINQKVVDI…QVVEYLEKRL (76 aa)). Ser37 is subject to O-(pantetheine 4'-phosphoryl)serine.

It belongs to the acyl carrier protein (ACP) family. 4'-phosphopantetheine is transferred from CoA to a specific serine of apo-ACP by AcpS. This modification is essential for activity because fatty acids are bound in thioester linkage to the sulfhydryl of the prosthetic group.

It localises to the cytoplasm. Its pathway is lipid metabolism; fatty acid biosynthesis. Carrier of the growing fatty acid chain in fatty acid biosynthesis. The protein is Acyl carrier protein of Amoebophilus asiaticus (strain 5a2).